Reading from the N-terminus, the 725-residue chain is ATP-dependent DNA helicase II subunit 2 (725 aa).

The Ku domain occupies 232–478 (LTLGDPQKYP…QQAMSDYVDA (247 aa)).

This sequence belongs to the ku80 family. In terms of assembly, heterodimer of mus-51/ku70 and mus-52/ku80.

It is found in the nucleus. It localises to the chromosome. The protein resides in the telomere. It carries out the reaction ATP + H2O = ADP + phosphate + H(+). In terms of biological role, single-stranded DNA-dependent ATP-dependent helicase. Involved in non-homologous end joining (NHEJ) DNA double strand break repair. DNA-binding is sequence-independent but has a high affinity to nicks in double-stranded DNA and to the ends of duplex DNA. Binds to naturally occurring chromosomal ends, and therefore provides chromosomal end protection. Required also for telomere recombination to repair telomeric ends in the absence of telomerase. ku70, of the ku70/ku80 heterodimer, binds to the stem loop of tlc1, the RNA component of telomerase. Involved in telomere maintenance. Interacts with telomeric repeats and subtelomeric sequences thereby controlling telomere length and protecting against subtelomeric rearrangement. Maintains telomeric chromatin, which is involved in silencing the expression of genes located at the telomere. Required for mating-type switching. This is ATP-dependent DNA helicase II subunit 2 (mus-52) from Neurospora crassa (strain ATCC 24698 / 74-OR23-1A / CBS 708.71 / DSM 1257 / FGSC 987).